Here is a 190-residue protein sequence, read N- to C-terminus: E3 ubiquitin-protein ligase RNF183 (190 aa).

The Cytoplasmic portion of the chain corresponds to 1–159 (MSEPQGQELR…RECVRNPHFR (159 aa)). Residues 13-60 (CPVCWNPFNNTFHTPKVLDCCHSFCVECLAHLSLVTPARRRLLCPLCR) form an RING-type zinc finger. The helical; Anchor for type IV membrane protein transmembrane segment at 160–180 (IFAYLMAVILSVTLLLIFSIF) threads the bilayer. Over 181–190 (WTKQFFWGMG) the chain is Lumenal.

Interacts with FATE1. Interacts with SEC16A. Interacts with BCL2L1. Autoubiquitinated (in vitro). As to expression, highly expressed in the kidney and testis.

It localises to the endoplasmic reticulum membrane. It is found in the endoplasmic reticulum. The protein localises to the golgi apparatus. Its subcellular location is the cis-Golgi network membrane. The protein resides in the lysosome membrane. It catalyses the reaction S-ubiquitinyl-[E2 ubiquitin-conjugating enzyme]-L-cysteine + [acceptor protein]-L-lysine = [E2 ubiquitin-conjugating enzyme]-L-cysteine + N(6)-ubiquitinyl-[acceptor protein]-L-lysine.. It participates in protein modification; protein ubiquitination. Its function is as follows. Acts as an E3 ubiquitin ligase catalyzing the covalent attachment of ubiquitin moieties onto substrate proteins. Triggers apoptosis in response to prolonged ER stress by mediating the polyubiquitination and subsequent proteasomal degradation of BCL2L1. May collaborate with FATE1 to restrain BIK protein levels thus regulating apoptotic signaling. This chain is E3 ubiquitin-protein ligase RNF183 (Rnf183), found in Mus musculus (Mouse).